We begin with the raw amino-acid sequence, 162 residues long: Endoribonuclease YbeY (162 aa).

His-128, His-132, and His-138 together coordinate Zn(2+).

Belongs to the endoribonuclease YbeY family. Requires Zn(2+) as cofactor.

It is found in the cytoplasm. Functionally, single strand-specific metallo-endoribonuclease involved in late-stage 70S ribosome quality control and in maturation of the 3' terminus of the 16S rRNA. The protein is Endoribonuclease YbeY of Lactococcus lactis subsp. cremoris (strain SK11).